Here is a 468-residue protein sequence, read N- to C-terminus: ATP synthase subunit beta (468 aa).

148-155 contributes to the ATP binding site; sequence GGAGVGKT.

Belongs to the ATPase alpha/beta chains family. In terms of assembly, F-type ATPases have 2 components, CF(1) - the catalytic core - and CF(0) - the membrane proton channel. CF(1) has five subunits: alpha(3), beta(3), gamma(1), delta(1), epsilon(1). CF(0) has three main subunits: a(1), b(2) and c(9-12). The alpha and beta chains form an alternating ring which encloses part of the gamma chain. CF(1) is attached to CF(0) by a central stalk formed by the gamma and epsilon chains, while a peripheral stalk is formed by the delta and b chains.

Its subcellular location is the cell inner membrane. The enzyme catalyses ATP + H2O + 4 H(+)(in) = ADP + phosphate + 5 H(+)(out). Functionally, produces ATP from ADP in the presence of a proton gradient across the membrane. The catalytic sites are hosted primarily by the beta subunits. The sequence is that of ATP synthase subunit beta from Stenotrophomonas maltophilia (strain R551-3).